Reading from the N-terminus, the 547-residue chain is Chaperonin GroEL (547 aa).

Residues 30–33, K51, 87–91, G415, 480–482, and D496 contribute to the ATP site; these read TLGP, DGTTT, and NAA. Positions 525–547 are disordered; sequence KPDDKPAMPPMGGGMGGMGGMDF. Residues 535 to 547 are compositionally biased toward gly residues; sequence MGGGMGGMGGMDF.

This sequence belongs to the chaperonin (HSP60) family. Forms a cylinder of 14 subunits composed of two heptameric rings stacked back-to-back. Interacts with the co-chaperonin GroES.

The protein resides in the cytoplasm. It catalyses the reaction ATP + H2O + a folded polypeptide = ADP + phosphate + an unfolded polypeptide.. Its function is as follows. Together with its co-chaperonin GroES, plays an essential role in assisting protein folding. The GroEL-GroES system forms a nano-cage that allows encapsulation of the non-native substrate proteins and provides a physical environment optimized to promote and accelerate protein folding. This Novosphingobium aromaticivorans (strain ATCC 700278 / DSM 12444 / CCUG 56034 / CIP 105152 / NBRC 16084 / F199) protein is Chaperonin GroEL.